Here is a 452-residue protein sequence, read N- to C-terminus: Eukaryotic translation initiation factor 3 subunit E (452 aa).

The 170-residue stretch at 257–426 (TDLFFSPAYI…GTVIMNHPPQ (170 aa)) folds into the PCI domain.

The protein belongs to the eIF-3 subunit E family. As to quaternary structure, component of the eukaryotic translation initiation factor 3 (eIF-3) complex.

It is found in the cytoplasm. In terms of biological role, component of the eukaryotic translation initiation factor 3 (eIF-3) complex, which is involved in protein synthesis of a specialized repertoire of mRNAs and, together with other initiation factors, stimulates binding of mRNA and methionyl-tRNAi to the 40S ribosome. The eIF-3 complex specifically targets and initiates translation of a subset of mRNAs involved in cell proliferation. The protein is Eukaryotic translation initiation factor 3 subunit E (int6) of Aspergillus niger (strain ATCC MYA-4892 / CBS 513.88 / FGSC A1513).